The chain runs to 143 residues: Protein SLC31A2 (143 aa).

Over 1 to 22 (MPMHFIFSDEAVLLFDFWRVHS) the chain is Extracellular. Residues 23–43 (PTGMALSVLVVLLLAVLYEGI) form a helical membrane-spanning segment. Residues 44-93 (KVGKAKLLHKTLESLPATNSQQFILGPDQDSTGSRSTSDNRTRLRWFLCY) lie on the Cytoplasmic side of the membrane. Residue T75 is modified to Phosphothreonine. Phosphoserine is present on S77. The chain crosses the membrane as a helical span at residues 94-114 (FGQSLVHVIQVVIGYFVMLAV). The Extracellular portion of the chain corresponds to 115-119 (MSYNT). Residues 120–140 (WIFLGVVLGSAVGYYLAYPLL) form a helical membrane-spanning segment. At 141 to 143 (NMT) the chain is on the cytoplasmic side.

This sequence belongs to the copper transporter (Ctr) (TC 1.A.56) family. SLC31A subfamily. In terms of assembly, oligomer. Interacts with SLC31A1; this interaction stabilizes SLC31A2 and protects it from ubiquitination and the subsequent degradation. Ubiquitinated; ubiquitination and the subsequent proteasomal degradation are prevent by SLC31A1 that stabilizes it.

It localises to the membrane. The protein localises to the cytoplasmic vesicle membrane. It is found in the late endosome membrane. Its subcellular location is the lysosome membrane. The protein resides in the recycling endosome membrane. Does not function as a copper(1+) importer in vivo. However, in vitro functions as a low-affinity copper(1+) importer. Regulator of SLC31A1 which facilitates the cleavage of the SLC31A1 ecto-domain or which stabilizes the truncated form of SLC31A1 (Truncated CTR1 form), thereby drives the SLC31A1 truncated form-dependent endosomal copper export and modulates the copper and cisplatin accumulation via SLC31A1. The chain is Protein SLC31A2 from Mus musculus (Mouse).